The sequence spans 321 residues: UDP-N-acetylenolpyruvoylglucosamine reductase (321 aa).

In terms of domain architecture, FAD-binding PCMH-type spans 39-205 (RTGGLAELFY…TAALLEGEPG (167 aa)). Residue R185 is part of the active site. The active-site Proton donor is S234. E304 is a catalytic residue.

The protein belongs to the MurB family. FAD is required as a cofactor.

It localises to the cytoplasm. It catalyses the reaction UDP-N-acetyl-alpha-D-muramate + NADP(+) = UDP-N-acetyl-3-O-(1-carboxyvinyl)-alpha-D-glucosamine + NADPH + H(+). The protein operates within cell wall biogenesis; peptidoglycan biosynthesis. Functionally, cell wall formation. The protein is UDP-N-acetylenolpyruvoylglucosamine reductase of Bartonella quintana (strain Toulouse) (Rochalimaea quintana).